A 230-amino-acid polypeptide reads, in one-letter code: Large ribosomal subunit protein uL1 (230 aa).

This sequence belongs to the universal ribosomal protein uL1 family. Part of the 50S ribosomal subunit.

Its function is as follows. Binds directly to 23S rRNA. The L1 stalk is quite mobile in the ribosome, and is involved in E site tRNA release. In terms of biological role, protein L1 is also a translational repressor protein, it controls the translation of the L11 operon by binding to its mRNA. The sequence is that of Large ribosomal subunit protein uL1 from Nitrosomonas europaea (strain ATCC 19718 / CIP 103999 / KCTC 2705 / NBRC 14298).